The sequence spans 225 residues: MRQRILVVDDDASLAEMLTIVLRGEGFDTAVIGDGTQALTAVRELRPDLVLLDLMLPGMNGIDVCRVLRADSGVPIVMLTAKTDTVDVVLGLESGADDYIMKPFKPKELVARVRARLRRNDDEPAEMLSIADVDIDVPAHKVTRNGEHISLTPLEFDLLVALARKPRQVFTRDVLLEQVWGYRHPADTRLVNVHVQRLRAKVEKDPENPTVVLTVRGVGYKAGPP.

The Response regulatory domain maps to 4–117 (RILVVDDDAS…ELVARVRARL (114 aa)). Asp53 carries the post-translational modification 4-aspartylphosphate. Positions 125-224 (AEMLSIADVD…VRGVGYKAGP (100 aa)) form a DNA-binding region, ompR/PhoB-type.

In terms of processing, phosphorylated by MtrB.

Its function is as follows. Member of the two-component regulatory system MtrA/MtrB. The chain is DNA-binding response regulator MtrA (mtrA) from Mycobacterium leprae (strain TN).